The following is a 156-amino-acid chain: Single-stranded DNA-binding protein 1 (156 aa).

The region spanning 1–107 (MNETMICAVG…IDAVAIGHDL (107 aa)) is the SSB domain. Positions 114–124 (FRRTARTEAST) are enriched in low complexity. The disordered stretch occupies residues 114–156 (FRRTARTEASTSPPRPEPNWEVPAGGTPGEPVPEQRPDPVPVG).

Homotetramer.

This is Single-stranded DNA-binding protein 1 (ssb1) from Streptomyces coelicolor (strain ATCC BAA-471 / A3(2) / M145).